The chain runs to 108 residues: UPF0102 protein Shewana3_3881 (108 aa).

The protein belongs to the UPF0102 family.

The sequence is that of UPF0102 protein Shewana3_3881 from Shewanella sp. (strain ANA-3).